The sequence spans 157 residues: Putative tRNA (cytidine(34)-2'-O)-methyltransferase (157 aa).

Residues I79, G104, and I125 each contribute to the S-adenosyl-L-methionine site.

Belongs to the class IV-like SAM-binding methyltransferase superfamily. RNA methyltransferase TrmH family. TrmL subfamily.

Its subcellular location is the cytoplasm. It carries out the reaction cytidine(34) in tRNA + S-adenosyl-L-methionine = 2'-O-methylcytidine(34) in tRNA + S-adenosyl-L-homocysteine + H(+). It catalyses the reaction 5-carboxymethylaminomethyluridine(34) in tRNA(Leu) + S-adenosyl-L-methionine = 5-carboxymethylaminomethyl-2'-O-methyluridine(34) in tRNA(Leu) + S-adenosyl-L-homocysteine + H(+). In terms of biological role, could methylate the ribose at the nucleotide 34 wobble position in tRNA. The sequence is that of Putative tRNA (cytidine(34)-2'-O)-methyltransferase from Geobacillus stearothermophilus (Bacillus stearothermophilus).